A 347-amino-acid polypeptide reads, in one-letter code: NADH-ubiquinone oxidoreductase chain 2 (347 aa).

A run of 11 helical transmembrane segments spans residues 3–23 (PMIL…VMMS), 25–45 (HWFL…PVLM), 59–79 (YFLT…INLI), 96–116 (TLLT…FWVP), 122–142 (VSLN…LSLL), 149–169 (VNTN…GWGG), 178–198 (IMAY…IYNP), 201–221 (SLLN…LLMF), 239–259 (IITT…PLSG), 274–294 (DSVI…FFYM), and 326–346 (MTSL…AMIL).

It belongs to the complex I subunit 2 family. As to quaternary structure, core subunit of respiratory chain NADH dehydrogenase (Complex I) which is composed of 45 different subunits. Interacts with TMEM242.

It localises to the mitochondrion inner membrane. The catalysed reaction is a ubiquinone + NADH + 5 H(+)(in) = a ubiquinol + NAD(+) + 4 H(+)(out). Its function is as follows. Core subunit of the mitochondrial membrane respiratory chain NADH dehydrogenase (Complex I) which catalyzes electron transfer from NADH through the respiratory chain, using ubiquinone as an electron acceptor. Essential for the catalytic activity and assembly of complex I. The sequence is that of NADH-ubiquinone oxidoreductase chain 2 from Sylvisorex johnstoni (Johnston's forest shrew).